The sequence spans 363 residues: Exopolygalacturonase rpg13 (363 aa).

A signal peptide spans 1–26 (MVKFLSLTSSVTALLLLSLGANGVAA). N-linked (GlcNAc...) asparagine glycans are attached at residues N121, N142, and N150. PbH1 repeat units lie at residues 143 to 173 (ATDVLINNITLHTASTSSLRPKNTDALDVSR), 174 to 195 (SSNVVFQNSKLTVGDDCLAINE), 197 to 217 (VTNVTLSKITCNGGHGFSVGS), 227 to 248 (VKTVRIHDSVCNDCQNGVRIKT), and 256 to 277 (VSDIKFNNVELNNVENPILITT). The active-site Proton donor is the D188. A disulfide bridge links C190 with C207. N199 carries an N-linked (GlcNAc...) asparagine glycan. H211 is a catalytic residue. N321 carries N-linked (GlcNAc...) asparagine glycosylation. Cysteines 322 and 328 form a disulfide. The stretch at 328–354 (CTDFTLSGVKITKASNTPKNVCVNLDG) is one PbH1 6 repeat.

The protein belongs to the glycosyl hydrolase 28 family. In terms of processing, N-glycosylated.

It is found in the secreted. The enzyme catalyses [(1-&gt;4)-alpha-D-galacturonosyl](n) + H2O = alpha-D-galacturonate + [(1-&gt;4)-alpha-D-galacturonosyl](n-1). Specific in hydrolyzing the terminal glycosidic bond of polygalacturonic acid and oligogalacturonates. Has no activity towards trigalacturonic acid. The sequence is that of Exopolygalacturonase rpg13 from Rhizopus delemar (strain RA 99-880 / ATCC MYA-4621 / FGSC 9543 / NRRL 43880) (Mucormycosis agent).